The sequence spans 171 residues: 6,7-dimethyl-8-ribityllumazine synthase (171 aa).

Residues Phe-24, Ala-58–Glu-60, and Ala-82–Ile-84 each bind 5-amino-6-(D-ribitylamino)uracil. Glu-87 to Thr-88 contacts (2S)-2-hydroxy-3-oxobutyl phosphate. The Proton donor role is filled by His-90. Residue Asn-115 coordinates 5-amino-6-(D-ribitylamino)uracil. (2S)-2-hydroxy-3-oxobutyl phosphate is bound at residue Arg-129. A disordered region spans residues Ala-150–Ala-171. Residues Leu-154–Ala-171 show a composition bias toward acidic residues.

It belongs to the DMRL synthase family.

The catalysed reaction is (2S)-2-hydroxy-3-oxobutyl phosphate + 5-amino-6-(D-ribitylamino)uracil = 6,7-dimethyl-8-(1-D-ribityl)lumazine + phosphate + 2 H2O + H(+). The protein operates within cofactor biosynthesis; riboflavin biosynthesis; riboflavin from 2-hydroxy-3-oxobutyl phosphate and 5-amino-6-(D-ribitylamino)uracil: step 1/2. Catalyzes the formation of 6,7-dimethyl-8-ribityllumazine by condensation of 5-amino-6-(D-ribitylamino)uracil with 3,4-dihydroxy-2-butanone 4-phosphate. This is the penultimate step in the biosynthesis of riboflavin. In Burkholderia ambifaria (strain MC40-6), this protein is 6,7-dimethyl-8-ribityllumazine synthase.